A 97-amino-acid polypeptide reads, in one-letter code: Plastocyanin A/B (97 aa).

A Plastocyanin-like domain is found at 1–97 (AEVKLGSDDG…AGMKGEVTVN (97 aa)). H37, C82, H85, and M90 together coordinate Cu cation.

This sequence belongs to the plastocyanin family. Cu(2+) is required as a cofactor.

The protein localises to the plastid. The protein resides in the chloroplast thylakoid membrane. Its function is as follows. Participates in electron transfer between P700 and the cytochrome b6-f complex in photosystem I. The polypeptide is Plastocyanin A/B (PETE) (Petroselinum crispum (Parsley)).